Consider the following 316-residue polypeptide: tRNA pseudouridine synthase B (316 aa).

The active-site Nucleophile is the Asp-47.

This sequence belongs to the pseudouridine synthase TruB family. Type 1 subfamily.

It carries out the reaction uridine(55) in tRNA = pseudouridine(55) in tRNA. Functionally, responsible for synthesis of pseudouridine from uracil-55 in the psi GC loop of transfer RNAs. This chain is tRNA pseudouridine synthase B, found in Aliivibrio fischeri (strain MJ11) (Vibrio fischeri).